The sequence spans 415 residues: Gamma-glutamyl phosphate reductase (415 aa).

Belongs to the gamma-glutamyl phosphate reductase family.

The protein localises to the cytoplasm. It catalyses the reaction L-glutamate 5-semialdehyde + phosphate + NADP(+) = L-glutamyl 5-phosphate + NADPH + H(+). The protein operates within amino-acid biosynthesis; L-proline biosynthesis; L-glutamate 5-semialdehyde from L-glutamate: step 2/2. Functionally, catalyzes the NADPH-dependent reduction of L-glutamate 5-phosphate into L-glutamate 5-semialdehyde and phosphate. The product spontaneously undergoes cyclization to form 1-pyrroline-5-carboxylate. In Bacillus subtilis (strain 168), this protein is Gamma-glutamyl phosphate reductase.